A 513-amino-acid chain; its full sequence is Zinc finger CCCH-type with G patch domain-containing protein (513 aa).

The C3H1-type zinc finger occupies 155–178 (PCSYYLEGECRFDEAKCRFSHGAL). Composition is skewed to acidic residues over residues 252–261 (DQDEDDELSS) and 273–283 (SDEAESDMDDL). Residues 252-283 (DQDEDDELSSEESTSSMRDASSDEAESDMDDL) form a disordered region. The region spanning 312–358 (TRGIGSKLMEKMGYIHGTGLGSEGRGIVTPVSAQILPQGRSLDACME) is the G-patch domain. Disordered regions lie at residues 411–430 (PGESTQQSEQVAKKAKNNEL) and 477–513 (QVQMQSHKQELATLQAQERSLSKEQQTRKSKNKMFEF). The span at 477–495 (QVQMQSHKQELATLQAQER) shows a compositional bias: polar residues. The segment covering 496 to 513 (SLSKEQQTRKSKNKMFEF) has biased composition (basic and acidic residues).

Its subcellular location is the nucleus. Its function is as follows. Transcription repressor. The protein is Zinc finger CCCH-type with G patch domain-containing protein of Drosophila sechellia (Fruit fly).